The primary structure comprises 303 residues: NAD kinase (303 aa).

Asp-85 functions as the Proton acceptor in the catalytic mechanism. Residues 85-86 (DG), 159-160 (ND), Arg-187, Asp-189, 200-205 (TAYALS), Ala-224, and Gln-258 contribute to the NAD(+) site.

This sequence belongs to the NAD kinase family. The cofactor is a divalent metal cation.

The protein localises to the cytoplasm. The catalysed reaction is NAD(+) + ATP = ADP + NADP(+) + H(+). In terms of biological role, involved in the regulation of the intracellular balance of NAD and NADP, and is a key enzyme in the biosynthesis of NADP. Catalyzes specifically the phosphorylation on 2'-hydroxyl of the adenosine moiety of NAD to yield NADP. In Variovorax paradoxus (strain S110), this protein is NAD kinase.